Reading from the N-terminus, the 239-residue chain is tRNA1(Val) (adenine(37)-N6)-methyltransferase (239 aa).

Belongs to the methyltransferase superfamily. tRNA (adenine-N(6)-)-methyltransferase family.

The protein resides in the cytoplasm. The catalysed reaction is adenosine(37) in tRNA1(Val) + S-adenosyl-L-methionine = N(6)-methyladenosine(37) in tRNA1(Val) + S-adenosyl-L-homocysteine + H(+). Functionally, specifically methylates the adenine in position 37 of tRNA(1)(Val) (anticodon cmo5UAC). This is tRNA1(Val) (adenine(37)-N6)-methyltransferase from Vibrio vulnificus (strain YJ016).